The chain runs to 296 residues: Small ribosomal subunit protein uS2 (296 aa).

The segment at 252–296 is disordered; sequence TSSKTVSKLKQSKKLSKTQNIDEETNTEFDQALGGACENNNSDNT.

The protein belongs to the universal ribosomal protein uS2 family.

In Rickettsia prowazekii (strain Madrid E), this protein is Small ribosomal subunit protein uS2 (rpsB).